The primary structure comprises 120 residues: Large ribosomal subunit protein bL20 (120 aa).

The protein belongs to the bacterial ribosomal protein bL20 family.

Its function is as follows. Binds directly to 23S ribosomal RNA and is necessary for the in vitro assembly process of the 50S ribosomal subunit. It is not involved in the protein synthesizing functions of that subunit. This chain is Large ribosomal subunit protein bL20, found in Chlamydia abortus (strain DSM 27085 / S26/3) (Chlamydophila abortus).